The chain runs to 218 residues: UPF0598 protein C8orf82 homolog (218 aa).

The protein belongs to the UPF0598 family.

In Mus musculus (Mouse), this protein is UPF0598 protein C8orf82 homolog.